The sequence spans 546 residues: NAD(P)H-quinone oxidoreductase chain 4 (546 aa).

Helical transmembrane passes span 24 to 44 (FPWL…IPFF), 56 to 76 (FALS…INGF), 108 to 128 (MPLI…AWPV), 132 to 152 (PKLF…VFAV), 156 to 176 (LLFF…LAIW), 188 to 208 (FIIY…AMGF), 232 to 252 (ILCY…VPLH), 263 to 283 (TAPV…YALL), 297 to 317 (FSPL…LTSF), 326 to 346 (IAYS…SFSS), 352 to 372 (AMLQ…LVGA), 396 to 416 (FALW…SGFV), 437 to 457 (VIMA…LLSM), and 484 to 504 (IYII…PRLV).

The protein belongs to the complex I subunit 4 family.

The protein resides in the cellular thylakoid membrane. It carries out the reaction a plastoquinone + NADH + (n+1) H(+)(in) = a plastoquinol + NAD(+) + n H(+)(out). It catalyses the reaction a plastoquinone + NADPH + (n+1) H(+)(in) = a plastoquinol + NADP(+) + n H(+)(out). Functionally, NDH-1 shuttles electrons from NAD(P)H, via FMN and iron-sulfur (Fe-S) centers, to quinones in the respiratory chain. The immediate electron acceptor for the enzyme in this species is believed to be plastoquinone. Couples the redox reaction to proton translocation (for every two electrons transferred, four hydrogen ions are translocated across the cytoplasmic membrane), and thus conserves the redox energy in a proton gradient. This is NAD(P)H-quinone oxidoreductase chain 4 from Prochlorococcus marinus subsp. pastoris (strain CCMP1986 / NIES-2087 / MED4).